Consider the following 1575-residue polypeptide: MNLTTTMPAAVAPDPPAQLAVSSRSLSDSSDAAGASRTSSSCRASSPSHCPTHAWNPDPPPSSLQPVFSFSPSLPPPCPSPAISSCPPNTLSPPNLLQGIVSQLAMASYIGRLLLYLFQVVPSLLYWAITFTTITVPTALFTLFSMSLTFTMNFTTLLIIVLLLVSTVSWFIRYRFLNIYSRLPPEPQRKEPEIDLFPDSQDGDSKPGLSNYLDEFLSAIKVFGYLERPVFHELTRTMQTRKLIAGETLLLEEEKGFCLVVDGLVQIFVKSIQERDDDRDGWQLDEAVEDSVDEDDEIRRRGHQGYQLLTEVKNGASMSSLFSILSLFSEDIKLRHNEDMESSSSSFNNVPAPDSNPMSPALLLESPTRVSFPDQRDIPTQPSADTLPKVSPLALEGSPGPFEHDPKPRGHRRKRPSRPKRAKSVHPDILARAMVDTTIAIIPASAFRRLTRVYPKATAHIIQVILTRLQRVTFATAHSYLGLTTEVLSIEQQMTKYTSFDLPNHLRGAALDKLKSKFTKEKERLGPEDGTKGIALHNPALNRRRRSSSSLRKDAALHAKLTAVRGKGSASNPIRYGDHESTGVSPGDLLSTIQLSRFGPRYGSERLNGRSVFYDAASGMKTPAGGPPSPLATPGQPLFRFPAQNVTFQRQDSLDQDAIFRESILDCMMKALGLTGSTQDALRKTHNSGDASPHLVSYDSRRQKAVFNNAFGFIDPYDGFGDGDSESLMSMSVTSAGGTSPVHNLRTELQDEIEIVYFPKGSVLIEQGEHNPGLYYVIDGFLDVGIPVNEKGEDLIGSSRRPTAEDILLPITGNASRVSSTLGTAHNQRKKASRRSLYMVKPGGVEGYIGSITSYRSFTDVTAKTDVYVGFLPRAVLERIADRYPLVMLTMAKRLTTVLPRLILHIDFALEWVQVNAGQVIHHQGDESDAIYIVLNGRLRAVLDKGDGKVSVLGEYGQGDSVGELEVMTESTRPGTLHAIRDTELAKFPRTLFNSLAQEHPGITIQISKLIAQRMRHIIDNPLEKGSDKGSPDSAKPTTSTLNLRTVAVLPVTAGIPVVEFGNRLLNAFNQVGVTNGVTSLHQADILNHLGRHAFSKMGKLKLAQYLADLEERYGMVLYVGDTSVNAPWTQTCIAQADCILLVALAEGSPAIGEYERFLLGMKTTARKELVLLHAERYSQPGLTRQWLKNRMWINGGHHHIQMAFRLTAEPVHPETKRLGAVLKQRVQVIQAEIQKYTSRRIRQTPVYSTSTPVKGDFHRLARRLCGKSVGLVLGGGGARGIAHIGVIKALEEAGIPIDIIGGTSIGSFIGALYARDADVVPAYGRAKKFSGRMASMWRFALDLTYPSASYTTGHEFNRGIFKAFGNSHIEDFWLEFYCNTTNISKSRLEFHSSGYAWRYVRASMSLAGLIPPLCDEGNMLLDGGYVDNLTVARMKSLGADVIFAVDVGAIDDNTPQGYGDSLSGFWALVNRWNPFSSLPNPPTLSEIQARLAYVSSVDALERAKSTPGCLYMRPPIDAFGTLDFAKFDEIYQVGYKFGKEFLDRLKNEGGLPIQEETEEKKKLRRTMAPRRASI.

Residues 1 to 56 (MNLTTTMPAAVAPDPPAQLAVSSRSLSDSSDAAGASRTSSSCRASSPSHCPTHAWN) are disordered. At 1-99 (MNLTTTMPAA…TLSPPNLLQG (99 aa)) the chain is on the cytoplasmic side. Low complexity predominate over residues 19–48 (LAVSSRSLSDSSDAAGASRTSSSCRASSPS). The helical transmembrane segment at 100 to 120 (IVSQLAMASYIGRLLLYLFQV) threads the bilayer. The Lumenal segment spans residues 121–151 (VPSLLYWAITFTTITVPTALFTLFSMSLTFT). The helical transmembrane segment at 152-172 (MNFTTLLIIVLLLVSTVSWFI) threads the bilayer. The Cytoplasmic segment spans residues 173–1575 (RYRFLNIYSR…RTMAPRRASI (1403 aa)). 2 disordered regions span residues 339-425 (DMES…AKSV) and 568-587 (GSASNPIRYGDHESTGVSPG). Residues 409–424 (RGHRRKRPSRPKRAKS) show a composition bias toward basic residues. Residues 737–856 (GGTS…TSYR) and 894–1014 (RLTT…IAQR) each bind a nucleoside 3',5'-cyclic phosphate. Positions 1272 to 1436 (LVLGGGGARG…VDNLTVARMK (165 aa)) constitute a PNPLA domain. The GXGXXG motif lies at 1276-1281 (GGGARG). The GXSXG signature appears at 1303–1307 (GTSIG). The active-site Nucleophile is serine 1305. Aspartate 1423 acts as the Proton acceptor in catalysis. Residues 1423–1425 (DGG) carry the DGA/G motif.

This sequence belongs to the NTE family.

The protein localises to the endoplasmic reticulum membrane. The enzyme catalyses a 1-acyl-sn-glycero-3-phosphocholine + H2O = sn-glycerol 3-phosphocholine + a fatty acid + H(+). Inhibited by organophosphorus esters. Intracellular phospholipase B that catalyzes the double deacylation of phosphatidylcholine (PC) to glycerophosphocholine (GroPCho). Plays an important role in membrane lipid homeostasis. Responsible for the rapid PC turnover in response to inositol, elevated temperatures, or when choline is present in the growth medium. The protein is Lysophospholipase NTE1 (NTE1) of Coccidioides immitis (strain RS) (Valley fever fungus).